The sequence spans 162 residues: Endoribonuclease YbeY (162 aa).

Residues His118, His122, and His128 each contribute to the Zn(2+) site.

Belongs to the endoribonuclease YbeY family. It depends on Zn(2+) as a cofactor.

The protein localises to the cytoplasm. Single strand-specific metallo-endoribonuclease involved in late-stage 70S ribosome quality control and in maturation of the 3' terminus of the 16S rRNA. The polypeptide is Endoribonuclease YbeY (Glaesserella parasuis serovar 5 (strain SH0165) (Haemophilus parasuis)).